The chain runs to 860 residues: Alanine--tRNA ligase (860 aa).

The Zn(2+) site is built by histidine 563, histidine 567, cysteine 665, and histidine 669.

This sequence belongs to the class-II aminoacyl-tRNA synthetase family. It depends on Zn(2+) as a cofactor.

It is found in the cytoplasm. The enzyme catalyses tRNA(Ala) + L-alanine + ATP = L-alanyl-tRNA(Ala) + AMP + diphosphate. Catalyzes the attachment of alanine to tRNA(Ala) in a two-step reaction: alanine is first activated by ATP to form Ala-AMP and then transferred to the acceptor end of tRNA(Ala). Also edits incorrectly charged Ser-tRNA(Ala) and Gly-tRNA(Ala) via its editing domain. This Vibrio cholerae serotype O1 (strain ATCC 39315 / El Tor Inaba N16961) protein is Alanine--tRNA ligase.